We begin with the raw amino-acid sequence, 188 residues long: Elongation factor P (188 aa).

It belongs to the elongation factor P family.

The protein localises to the cytoplasm. Its pathway is protein biosynthesis; polypeptide chain elongation. Functionally, involved in peptide bond synthesis. Stimulates efficient translation and peptide-bond synthesis on native or reconstituted 70S ribosomes in vitro. Probably functions indirectly by altering the affinity of the ribosome for aminoacyl-tRNA, thus increasing their reactivity as acceptors for peptidyl transferase. The polypeptide is Elongation factor P (Rhodopseudomonas palustris (strain HaA2)).